The following is a 257-amino-acid chain: UPF0246 protein Spea_1078 (257 aa).

The protein belongs to the UPF0246 family.

The sequence is that of UPF0246 protein Spea_1078 from Shewanella pealeana (strain ATCC 700345 / ANG-SQ1).